We begin with the raw amino-acid sequence, 496 residues long: Thiamine transporter 2 (496 aa).

The Cytoplasmic portion of the chain corresponds to 1 to 7; that stretch reads MDCYRTS. Residues 8–28 traverse the membrane as a helical segment; sequence LSSSWIYPTVILCLFGFFSMM. Over 29 to 53 the chain is Extracellular; that stretch reads RPSEPFLIPYLSGPDKNLTSAEITN. N45 carries an N-linked (GlcNAc...) asparagine glycan. The helical transmembrane segment at 54 to 74 threads the bilayer; sequence EIFPVWTYSYLVLLLPVFVLT. Residues 75-81 are Cytoplasmic-facing; sequence DYVRYKP. The helical transmembrane segment at 82 to 102 threads the bilayer; the sequence is VIILQGISFIITWLLLLFGQG. Residues 103–110 are Extracellular-facing; that stretch reads VKTMQVVE. A helical membrane pass occupies residues 111 to 131; the sequence is FFYGMVTAAEVAYYAYIYSVV. The Cytoplasmic segment spans residues 132 to 144; it reads SPEHYQRVSGYCR. A helical membrane pass occupies residues 145 to 165; the sequence is SVTLAAYTAGSVLAQLLVSLA. N-linked (GlcNAc...) asparagine glycosylation is present at N166. Over 166-169 the chain is Extracellular; that stretch reads NMSY. The chain crosses the membrane as a helical span at residues 170–190; it reads FYLNVISLASVSVAFLFSLFL. Topologically, residues 191–282 are cytoplasmic; sequence PMPKKSMFFH…YSSKRLFYWS (92 aa). Residues 283–303 traverse the membrane as a helical segment; it reads LWWAFATAGFNQVLNYVQILW. The Extracellular segment spans residues 304–316; the sequence is DYKAPSQDSSIYN. A helical membrane pass occupies residues 317–337; sequence GAVEAIATFGGAVAAFAVGYV. At 338–342 the chain is on the cytoplasmic side; it reads KVNWD. A helical membrane pass occupies residues 343-363; that stretch reads LLGELALVVFSVVNAGSLFLM. The Extracellular segment spans residues 364–375; that stretch reads HYTANIWACYAG. Residues 376–396 form a helical membrane-spanning segment; it reads YLIFKSSYMLLITIAVFQIAV. The Cytoplasmic segment spans residues 397–405; sequence NLNVERYAL. The chain crosses the membrane as a helical span at residues 406–426; the sequence is VFGINTFIALVIQTIMTVIVV. At 427 to 434 the chain is on the extracellular side; that stretch reads DQRGLNLP. A helical membrane pass occupies residues 435–455; it reads VSIQFLVYGSYFAVIAGIFLM. Residues 456–496 lie on the Cytoplasmic side of the membrane; it reads RSMYITYSTKSQKDVQSPAPSENPDVSHPEEESNIIMSTKL. The interval 468–496 is disordered; that stretch reads KDVQSPAPSENPDVSHPEEESNIIMSTKL.

It belongs to the reduced folate carrier (RFC) transporter (TC 2.A.48) family. Widely expressed but most abundant in placenta, kidney and liver.

The protein resides in the membrane. It carries out the reaction thiamine(out) + H(+)(in) = thiamine(in) + H(+)(out). The enzyme catalyses pyridoxine(out) + n H(+)(out) = pyridoxine(in) + n H(+)(in). Its activity is regulated as follows. Pyridoxine transport is inhibited by carbonyl cyanide p-trifluoromethoxyphenylhydrazone (FCCP) and carbonyl cyanide m-chlorophenylhydrazone (CCCP). In terms of biological role, mediates high affinity thiamine uptake, probably via a proton anti-port mechanism. Has no folate transport activity. Mediates H(+)-dependent pyridoxine transport. The sequence is that of Thiamine transporter 2 (SLC19A3) from Homo sapiens (Human).